The chain runs to 1107 residues: uncharacterized protein (1107 aa).

The span at 180–204 (SGNGSSGGNNNNNNNSLNNSNNSIG) shows a compositional bias: low complexity. Disordered regions lie at residues 180 to 251 (SGNG…SGNN) and 501 to 530 (LMNI…DNQM). Residues 205 to 215 (SSGGNGGGGSN) show a composition bias toward gly residues. The span at 219–237 (PSMSPQFTSISKTNSPQII) shows a compositional bias: polar residues. Low complexity-rich tracts occupy residues 238–251 (NTSS…SGNN) and 501–521 (LMNI…NNND). Coiled coils occupy residues 789–816 (KKDI…IYRE) and 940–1012 (NIDH…NMLK).

This is an uncharacterized protein from Dictyostelium discoideum (Social amoeba).